The primary structure comprises 44 residues: ADCSATGDTCDHTKKCCDDCYTCRCGTPWGANCRCDYYKARCDT.

5 disulfides stabilise this stretch: Cys3–Cys17, Cys10–Cys23, Cys16–Cys35, Cys20–Cys42, and Cys25–Cys33. Thr44 carries the post-translational modification Threonine amide. Thr44 carries O-palmitoyl threonine lipidation.

The protein belongs to the neurotoxin 02 (plectoxin) family. 02 (plectoxin) subfamily. In terms of processing, contains 5 disulfide bonds. Acylation by palmitate is required for biological activity. In terms of tissue distribution, expressed by the venom gland.

The protein localises to the secreted. Its function is as follows. Toxin that inhibits presynaptic voltage-gated calcium channel (Cav) in Drosophila nerve terminals, most likely through specific block of the Cav2 channel (known as Dmca1A). The protein is Omega-plectoxin-Pt1a of Plectreurys tristis (Spider).